The sequence spans 89 residues: Cell division topological specificity factor (89 aa).

Belongs to the MinE family.

Its function is as follows. Prevents the cell division inhibition by proteins MinC and MinD at internal division sites while permitting inhibition at polar sites. This ensures cell division at the proper site by restricting the formation of a division septum at the midpoint of the long axis of the cell. The polypeptide is Cell division topological specificity factor (Photorhabdus laumondii subsp. laumondii (strain DSM 15139 / CIP 105565 / TT01) (Photorhabdus luminescens subsp. laumondii)).